A 364-amino-acid polypeptide reads, in one-letter code: Histidinol-phosphate aminotransferase 1 (364 aa).

At Lys-211 the chain carries N6-(pyridoxal phosphate)lysine.

It belongs to the class-II pyridoxal-phosphate-dependent aminotransferase family. Histidinol-phosphate aminotransferase subfamily. As to quaternary structure, homodimer. Requires pyridoxal 5'-phosphate as cofactor.

The enzyme catalyses L-histidinol phosphate + 2-oxoglutarate = 3-(imidazol-4-yl)-2-oxopropyl phosphate + L-glutamate. It functions in the pathway amino-acid biosynthesis; L-histidine biosynthesis; L-histidine from 5-phospho-alpha-D-ribose 1-diphosphate: step 7/9. The chain is Histidinol-phosphate aminotransferase 1 from Legionella pneumophila (strain Paris).